The primary structure comprises 268 residues: Undecaprenyl-diphosphatase (268 aa).

A run of 8 helical transmembrane segments spans residues Phe-11–Ile-33, Phe-46–Leu-66, Leu-84–Ile-104, Val-107–Leu-127, Tyr-144–Val-164, Ala-185–Phe-205, Phe-213–Val-233, and Phe-246–Ile-266.

Belongs to the UppP family.

It localises to the cell inner membrane. The enzyme catalyses di-trans,octa-cis-undecaprenyl diphosphate + H2O = di-trans,octa-cis-undecaprenyl phosphate + phosphate + H(+). Functionally, catalyzes the dephosphorylation of undecaprenyl diphosphate (UPP). Confers resistance to bacitracin. This is Undecaprenyl-diphosphatase from Brucella suis (strain ATCC 23445 / NCTC 10510).